The primary structure comprises 343 residues: MLRKVVLLRLCPLLGRPAVSASSGSRREVASGVPPSGSTSPRALNIFDRELKRKQKNWAARQPDPMKFDYLKEEVGSRIADRVYDIARDFPLALDIGCGRGYIAQHLDKETVGKIFQTDIAEHALKNSLETDIPTVNILADEEFLPFQENTFDLVVSSLSLHWVNDLPRALEQIHYVLKPDGVFVGAMFGGDTLYELRCSLQLAETEREGGFSPHISPFTAVNDLGHLLGRAGFNTLTVDTDEIQVNYPGMFELMEDLKGMGESNCSWNRKALLHRDTMLAAAAVYREMYRNEDGSIPATFQIYHMIGWKYHDSQARPAERGSATVSFGELAKLNDVMSHEKK.

A mitochondrion-targeting transit peptide spans 1-29 (MLRKVVLLRLCPLLGRPAVSASSGSRREV).

Belongs to the methyltransferase superfamily. Interacts with NDUFAF8, leading to stabilize NDUFAF5. Interacts with NDUFS7. Interacts with PYURF (via TRM112 domain); the interaction is direct and stabilizes NDUFAF5 protein.

The protein resides in the mitochondrion inner membrane. In terms of biological role, arginine hydroxylase that mediates hydroxylation of 'Arg-122' of NDUFS7 and is involved in the assembly of mitochondrial NADH:ubiquinone oxidoreductase complex (complex I, MT-ND1) at early stages. May also have methyltransferase activity. This chain is Arginine-hydroxylase NDUFAF5, mitochondrial, found in Mus musculus (Mouse).